Consider the following 616-residue polypeptide: Dihydroxy-acid dehydratase (616 aa).

Aspartate 81 serves as a coordination point for Mg(2+). Cysteine 122 contributes to the [2Fe-2S] cluster binding site. The Mg(2+) site is built by aspartate 123 and lysine 124. Lysine 124 bears the N6-carboxylysine mark. Position 195 (cysteine 195) interacts with [2Fe-2S] cluster. Residue glutamate 491 coordinates Mg(2+). Serine 517 serves as the catalytic Proton acceptor.

The protein belongs to the IlvD/Edd family. In terms of assembly, homodimer. [2Fe-2S] cluster serves as cofactor. Requires Mg(2+) as cofactor.

The catalysed reaction is (2R)-2,3-dihydroxy-3-methylbutanoate = 3-methyl-2-oxobutanoate + H2O. It catalyses the reaction (2R,3R)-2,3-dihydroxy-3-methylpentanoate = (S)-3-methyl-2-oxopentanoate + H2O. The protein operates within amino-acid biosynthesis; L-isoleucine biosynthesis; L-isoleucine from 2-oxobutanoate: step 3/4. It participates in amino-acid biosynthesis; L-valine biosynthesis; L-valine from pyruvate: step 3/4. Its function is as follows. Functions in the biosynthesis of branched-chain amino acids. Catalyzes the dehydration of (2R,3R)-2,3-dihydroxy-3-methylpentanoate (2,3-dihydroxy-3-methylvalerate) into 2-oxo-3-methylpentanoate (2-oxo-3-methylvalerate) and of (2R)-2,3-dihydroxy-3-methylbutanoate (2,3-dihydroxyisovalerate) into 2-oxo-3-methylbutanoate (2-oxoisovalerate), the penultimate precursor to L-isoleucine and L-valine, respectively. This chain is Dihydroxy-acid dehydratase, found in Shewanella sediminis (strain HAW-EB3).